The chain runs to 291 residues: Zinc transporter ZupT (291 aa).

Transmembrane regions (helical) follow at residues 8–28 (IFIAMLLTLFAGFSTAIGSII), 39–59 (VLSLGLGFSAGVMIYISFMEI), 74–94 (HWAELLGLACFFGGILISLLI), 147–167 (GIFTALAIAIHNFPEGFATFI), 174–194 (TLGIAIAIAVAIHNIPEGLAV), 209–229 (FIYSALSGFAEPLGAFVGALI), 233–253 (FIGDLTLAISFAVIAGIMVFI), and 271–291 (SLYGLIAGMAIMALSLNLLGQ). Positions 158 and 161 each coordinate Fe(2+). Residues Glu161 and His186 each contribute to the Zn(2+) site. Positions 187, 190, and 219 each coordinate Fe(2+). Glu190 serves as a coordination point for Zn(2+).

The protein belongs to the ZIP transporter (TC 2.A.5) family. ZupT subfamily.

The protein resides in the cell inner membrane. The catalysed reaction is Zn(2+)(in) = Zn(2+)(out). Functionally, mediates zinc uptake. May also transport other divalent cations. The protein is Zinc transporter ZupT of Campylobacter jejuni subsp. jejuni serotype O:2 (strain ATCC 700819 / NCTC 11168).